Consider the following 331-residue polypeptide: Probable cyclic nucleotide synthase IK1_05630 (331 aa).

This sequence belongs to the CD-NTase family. D12 subfamily.

Its function is as follows. Cyclic nucleotide synthase (second messenger synthase) of a CBASS antivirus system. CBASS (cyclic oligonucleotide-based antiphage signaling system) provides immunity against bacteriophage. The CD-NTase protein synthesizes cyclic nucleotides in response to infection; these serve as specific second messenger signals. The signals activate a diverse range of effectors, leading to bacterial cell death and thus abortive phage infection. A type I-B CBASS system. Functionally, probably a cyclic nucleotide synthase that makes second messenger nucleotide which activates a CBASS antiviral defense system. In terms of biological role, protects B.subtilis against phage infection. When IK1_05630 and IK1_05631 are introduced in B.subtilis BEST7003 there is 1000-fold protection against phage SBSphiC. Both genes are required for protection. Activation leads to bacterial cell lysis and death, which occurs before the phage has finished its replication cycle, thus protecting non-infected bacteria by aborting the phage infection and preventing its propagation. The sequence is that of Probable cyclic nucleotide synthase IK1_05630 from Bacillus cereus (strain VD146).